The chain runs to 151 residues: Superoxide dismutase [Cu-Zn] 2 (151 aa).

Positions 44, 46, and 61 each coordinate Cu cation. A disulfide bridge links cysteine 55 with cysteine 144. Residues histidine 61, histidine 69, histidine 78, and aspartate 81 each coordinate Zn(2+). Histidine 118 provides a ligand contact to Cu cation.

The protein belongs to the Cu-Zn superoxide dismutase family. Homodimer. It depends on Cu cation as a cofactor. Requires Zn(2+) as cofactor.

Its subcellular location is the cytoplasm. It carries out the reaction 2 superoxide + 2 H(+) = H2O2 + O2. Destroys radicals which are normally produced within the cells and which are toxic to biological systems. This Zea mays (Maize) protein is Superoxide dismutase [Cu-Zn] 2 (SODCC.1).